The chain runs to 306 residues: Probable cobalamin biosynthesis protein CobD (306 aa).

Helical transmembrane passes span 54-74, 88-108, 155-175, 207-227, and 286-306; these read LFGF…AFEI, ISLY…IEFS, ITDS…PGAF, ILNF…APFY, and SLKA…ILFM.

It belongs to the CobD/CbiB family.

It is found in the cell membrane. The protein operates within cofactor biosynthesis; adenosylcobalamin biosynthesis. Functionally, converts cobyric acid to cobinamide by the addition of aminopropanol on the F carboxylic group. The sequence is that of Probable cobalamin biosynthesis protein CobD from Methanococcus maripaludis (strain DSM 14266 / JCM 13030 / NBRC 101832 / S2 / LL).